Here is a 458-residue protein sequence, read N- to C-terminus: Bifunctional protein GlmU (458 aa).

Positions 1–231 are pyrophosphorylase; that stretch reads MSNRALSVVV…QTEVEGVNNR (231 aa). UDP-N-acetyl-alpha-D-glucosamine contacts are provided by residues 11 to 14, lysine 25, glutamine 78, 83 to 84, 105 to 107, glycine 142, glutamate 156, asparagine 171, and asparagine 229; these read LAAG, GT, and YGD. A Mg(2+)-binding site is contributed by aspartate 107. Position 229 (asparagine 229) interacts with Mg(2+). Residues 232 to 252 form a linker region; it reads LQLARLERLFQREQAERLLLA. Residues 253–458 form an N-acetyltransferase region; it reads GVMLSDPDRF…ANWTRPVKKK (206 aa). UDP-N-acetyl-alpha-D-glucosamine-binding residues include arginine 335 and lysine 353. The Proton acceptor role is filled by histidine 365. The UDP-N-acetyl-alpha-D-glucosamine site is built by tyrosine 368 and asparagine 379. Residues alanine 382, 388 to 389, serine 407, alanine 425, and arginine 442 each bind acetyl-CoA; that span reads NY.

The protein in the N-terminal section; belongs to the N-acetylglucosamine-1-phosphate uridyltransferase family. This sequence in the C-terminal section; belongs to the transferase hexapeptide repeat family. Homotrimer. The cofactor is Mg(2+).

Its subcellular location is the cytoplasm. The enzyme catalyses alpha-D-glucosamine 1-phosphate + acetyl-CoA = N-acetyl-alpha-D-glucosamine 1-phosphate + CoA + H(+). The catalysed reaction is N-acetyl-alpha-D-glucosamine 1-phosphate + UTP + H(+) = UDP-N-acetyl-alpha-D-glucosamine + diphosphate. Its pathway is nucleotide-sugar biosynthesis; UDP-N-acetyl-alpha-D-glucosamine biosynthesis; N-acetyl-alpha-D-glucosamine 1-phosphate from alpha-D-glucosamine 6-phosphate (route II): step 2/2. It participates in nucleotide-sugar biosynthesis; UDP-N-acetyl-alpha-D-glucosamine biosynthesis; UDP-N-acetyl-alpha-D-glucosamine from N-acetyl-alpha-D-glucosamine 1-phosphate: step 1/1. It functions in the pathway bacterial outer membrane biogenesis; LPS lipid A biosynthesis. Functionally, catalyzes the last two sequential reactions in the de novo biosynthetic pathway for UDP-N-acetylglucosamine (UDP-GlcNAc). The C-terminal domain catalyzes the transfer of acetyl group from acetyl coenzyme A to glucosamine-1-phosphate (GlcN-1-P) to produce N-acetylglucosamine-1-phosphate (GlcNAc-1-P), which is converted into UDP-GlcNAc by the transfer of uridine 5-monophosphate (from uridine 5-triphosphate), a reaction catalyzed by the N-terminal domain. The polypeptide is Bifunctional protein GlmU (Sodalis glossinidius (strain morsitans)).